The primary structure comprises 344 residues: Arginine N-succinyltransferase (344 aa).

Leu125 is a succinyl-CoA binding site. His229 acts as the Proton donor in catalysis.

This sequence belongs to the arginine N-succinyltransferase family.

The catalysed reaction is succinyl-CoA + L-arginine = N(2)-succinyl-L-arginine + CoA + H(+). The protein operates within amino-acid degradation; L-arginine degradation via AST pathway; L-glutamate and succinate from L-arginine: step 1/5. Catalyzes the transfer of succinyl-CoA to arginine to produce N(2)-succinylarginine. The sequence is that of Arginine N-succinyltransferase from Shigella sonnei (strain Ss046).